The following is a 192-amino-acid chain: Thymidine kinase (192 aa).

ATP is bound by residues 9-16 and 87-90; these read SAMNAGKS and DECQ. Glu-88 serves as the catalytic Proton acceptor. Zn(2+)-binding residues include Cys-145, Cys-147, Cys-182, and His-185.

Belongs to the thymidine kinase family. As to quaternary structure, homotetramer.

Its subcellular location is the cytoplasm. The enzyme catalyses thymidine + ATP = dTMP + ADP + H(+). In Aliivibrio fischeri (strain ATCC 700601 / ES114) (Vibrio fischeri), this protein is Thymidine kinase.